Consider the following 176-residue polypeptide: MASFGVRGMGQPLGIRICCCRVCTCINFGFVLSRIGLLKLMQLGLAMLCEGLLIRYGVPYADSIGQALTSFLATTGHCFTTTGILLLCYAFSDKSYSLIRQSLFETLFNGLASCMYFSSSSYMGFACVVWLHPQFLVRPGFWAYPAMTACYYMGYAAGILHALDAYLAFRHFRGAR.

The next 4 membrane-spanning stretches (helical) occupy residues 13–35 (LGIRICCCRVCTCINFGFVLSRI), 71–91 (FLATTGHCFTTTGILLLCYAF), 111–131 (LASCMYFSSSSYMGFACVVWL), and 140–160 (GFWAYPAMTACYYMGYAAGIL). Residues 30-173 (FVLSRIGLLK…DAYLAFRHFR (144 aa)) form the MARVEL domain.

It localises to the membrane. Essential for myoblast fusion in developing embryos and pupae, and consequently is essential for muscle formation in adults. Required for progression past the pre-fusion complex stage of myoblast fusion. This chain is Protein singles bar, found in Drosophila melanogaster (Fruit fly).